Here is a 423-residue protein sequence, read N- to C-terminus: D-tagatose-1,6-bisphosphate aldolase subunit GatZ (423 aa).

The protein belongs to the GatZ/KbaZ family. GatZ subfamily. Forms a complex with GatY.

The protein operates within carbohydrate metabolism; D-tagatose 6-phosphate degradation; D-glyceraldehyde 3-phosphate and glycerone phosphate from D-tagatose 6-phosphate: step 2/2. Functionally, component of the tagatose-1,6-bisphosphate aldolase GatYZ that is required for full activity and stability of the Y subunit. Could have a chaperone-like function for the proper and stable folding of GatY. When expressed alone, GatZ does not show any aldolase activity. Is involved in the catabolism of galactitol. In Salmonella enteritidis PT4 (strain P125109), this protein is D-tagatose-1,6-bisphosphate aldolase subunit GatZ.